A 123-amino-acid polypeptide reads, in one-letter code: Ig heavy chain V region H8 (123 aa).

In terms of domain architecture, Ig-like spans 1 to 114 (EVKLVESGGG…BSYWYFDVWG (114 aa)).

The protein is Ig heavy chain V region H8 of Mus musculus (Mouse).